A 347-amino-acid polypeptide reads, in one-letter code: Protein RecA (347 aa).

Residue 64–71 (GPESSGKT) coordinates ATP.

It belongs to the RecA family.

It localises to the cytoplasm. Its function is as follows. Can catalyze the hydrolysis of ATP in the presence of single-stranded DNA, the ATP-dependent uptake of single-stranded DNA by duplex DNA, and the ATP-dependent hybridization of homologous single-stranded DNAs. It interacts with LexA causing its activation and leading to its autocatalytic cleavage. The protein is Protein RecA of Bacillus velezensis (strain DSM 23117 / BGSC 10A6 / LMG 26770 / FZB42) (Bacillus amyloliquefaciens subsp. plantarum).